The primary structure comprises 184 residues: Adenylate kinase 2 (184 aa).

Position 10–15 (10–15 (GSGKST)) interacts with ATP. An NMP region spans residues 30-59 (STGEILREAISHLSELGRHAQPYMIKGELV). AMP is bound by residues threonine 31, arginine 36, 57 to 59 (ELV), 85 to 88 (GYPR), and glutamine 92. The LID stretch occupies residues 126–132 (GRSLPDD). Arginine 127 contributes to the ATP binding site. Residue arginine 140 participates in AMP binding. Position 168 (glutamine 168) interacts with ATP.

This sequence belongs to the adenylate kinase family. As to quaternary structure, monomer.

It localises to the cytoplasm. It catalyses the reaction AMP + ATP = 2 ADP. It functions in the pathway purine metabolism; AMP biosynthesis via salvage pathway; AMP from ADP: step 1/1. Catalyzes the reversible transfer of the terminal phosphate group between ATP and AMP. Plays an important role in cellular energy homeostasis and in adenine nucleotide metabolism. This Nostoc sp. (strain PCC 7120 / SAG 25.82 / UTEX 2576) protein is Adenylate kinase 2.